Reading from the N-terminus, the 240-residue chain is Tetrahydromethanopterin S-methyltransferase subunit A (240 aa).

Over 1–216 (MADKKAPASG…DAALIAKFNS (216 aa)) the chain is Cytoplasmic. 5-hydroxybenzimidazolylcob(I)amide is bound at residue His85. Residues 217-234 (GYYNGKIQGIAIGLFLSL) traverse the membrane as a helical segment. Topologically, residues 235-240 (LIFSLL) are extracellular.

This sequence belongs to the MtrA family. The complex is composed of 8 subunits; MtrA, MtrB, MtrC, MtrD, MtrE, MtrF, MtrG and MtrH. Requires 5-hydroxybenzimidazolylcob(I)amide as cofactor.

It localises to the cell membrane. The catalysed reaction is 5-methyl-5,6,7,8-tetrahydromethanopterin + coenzyme M + 2 Na(+)(in) = 5,6,7,8-tetrahydromethanopterin + methyl-coenzyme M + 2 Na(+)(out). The protein operates within one-carbon metabolism; methanogenesis from CO(2); methyl-coenzyme M from 5,10-methylene-5,6,7,8-tetrahydromethanopterin: step 2/2. In terms of biological role, part of a complex that catalyzes the formation of methyl-coenzyme M and tetrahydromethanopterin from coenzyme M and methyl-tetrahydromethanopterin. This is an energy-conserving, sodium-ion translocating step. This is Tetrahydromethanopterin S-methyltransferase subunit A from Methanococcus aeolicus (strain ATCC BAA-1280 / DSM 17508 / OCM 812 / Nankai-3).